A 518-amino-acid polypeptide reads, in one-letter code: UPF0053 inner membrane protein YoaE (518 aa).

Residues methionine 1–leucine 13 are Cytoplasmic-facing. A helical membrane pass occupies residues leucine 14 to leucine 34. Residues alanine 35 to leucine 48 are Periplasmic-facing. Residues leucine 49–valine 69 traverse the membrane as a helical segment. Residues threonine 70–valine 78 lie on the Cytoplasmic side of the membrane. A helical membrane pass occupies residues methionine 79 to phenylalanine 99. At lysine 100 to serine 124 the chain is on the periplasmic side. Residues phenylalanine 125–isoleucine 145 form a helical membrane-spanning segment. At threonine 146 to glycine 149 the chain is on the cytoplasmic side. The chain crosses the membrane as a helical span at residues methionine 150–leucine 170. Topologically, residues alanine 171–threonine 184 are periplasmic. Residues valine 185–phenylalanine 205 form a helical membrane-spanning segment. Residue glycine 206 is a topological domain, cytoplasmic. Residues phenylalanine 207–phenylalanine 227 traverse the membrane as a helical segment. The Periplasmic segment spans residues asparagine 228 to leucine 354. CBS domains are found at residues methionine 304–valine 363 and alanine 367–glutamate 427. A helical transmembrane segment spans residues valine 355 to valine 375. Residues proline 376–glutamate 518 lie on the Cytoplasmic side of the membrane.

The protein belongs to the UPF0053 family.

Its subcellular location is the cell inner membrane. The chain is UPF0053 inner membrane protein YoaE (yoaE) from Escherichia coli O157:H7.